The sequence spans 1032 residues: Vacuolar membrane protease (1032 aa).

Topologically, residues 1-11 (MKLGNPFVFRP) are cytoplasmic. Residues 12 to 32 (GPVSFWTTIVYLAIIIPLIYV) traverse the membrane as a helical segment. At 33-415 (QETVPPAPSE…SAFALRGLFA (383 aa)) the chain is on the vacuolar side. Asparagine 50, asparagine 138, and asparagine 147 each carry an N-linked (GlcNAc...) asparagine glycan. Positions 194 and 206 each coordinate Zn(2+). Glutamate 240 serves as the catalytic Proton acceptor. Positions 241, 266, and 339 each coordinate Zn(2+). Residues 416–436 (WTLTLLITTPLVLFVVTYLLV) traverse the membrane as a helical segment. The Cytoplasmic portion of the chain corresponds to 437-469 (RDDKWYFFATKVDSTVGDGEETVSFGGWKGFVR). A helical transmembrane segment spans residues 470 to 490 (FPFALVVATALTIGSVFLLAK). Topologically, residues 491–493 (VNP) are vacuolar. The helical transmembrane segment at 494-514 (LIIYSSGYSVWAMMISLFYFV) threads the bilayer. Residues 515 to 532 (SWLLLRGAHFVRPSALQR) lie on the Cytoplasmic side of the membrane. Residues 533-553 (GFTLIWLFIITWVLSVFAAVA) traverse the membrane as a helical segment. Topologically, residues 554–560 (EDRMNMG) are vacuolar. A helical membrane pass occupies residues 561–581 (AVYPLAFLHTFAFAAVLISLL). Residues 582–701 (EQYALPAKQD…WSGRLPTWTW (120 aa)) lie on the Cytoplasmic side of the membrane. The interval 595-688 (QVSGENEEEE…RKRSFPPYEN (94 aa)) is disordered. Acidic residues predominate over residues 599 to 608 (ENEEEEEQEQ). Residues 651 to 660 (SSEQTTTFAN) are compositionally biased toward polar residues. The helical transmembrane segment at 702–722 (FIQLLLLVPLYVTVLGNLALV) threads the bilayer. Over 723 to 738 (QTTSIGKTGTDGSSLL) the chain is Vacuolar. A helical transmembrane segment spans residues 739–759 (APLMGVGILAILLLLPLTPFI). Residues 760 to 766 (HRVSHHV) lie on the Cytoplasmic side of the membrane. Residues 767 to 787 (PLFLFLVFIGTLIYNLTAFPF) form a helical membrane-spanning segment. The Vacuolar segment spans residues 788–1032 (SDNNRFKFYF…VEITKKIKVA (245 aa)). Asparagine 940 carries N-linked (GlcNAc...) asparagine glycosylation.

This sequence belongs to the peptidase M28 family. Zn(2+) is required as a cofactor.

It localises to the vacuole membrane. In terms of biological role, may be involved in vacuolar sorting and osmoregulation. In Metarhizium robertsii (strain ARSEF 23 / ATCC MYA-3075) (Metarhizium anisopliae (strain ARSEF 23)), this protein is Vacuolar membrane protease.